Here is a 386-residue protein sequence, read N- to C-terminus: Pepsin A (386 aa).

Positions 1–15 (MKWLLLISLVALSEC) are cleaved as a signal peptide. Residues 16-60 (AIVKVPLVRKKSLRQNLIEHGLLNDFLKNQSPNPASKYFPQEPTV) constitute a propeptide, activation peptide. In terms of domain architecture, Peptidase A1 spans 74–383 (YFGTIGIGTP…DRANNQVGLA (310 aa)). Aspartate 92 is an active-site residue. Intrachain disulfides connect cysteine 105/cysteine 110 and cysteine 266/cysteine 270. Aspartate 275 is a catalytic residue. Residues cysteine 309 and cysteine 342 are joined by a disulfide bond.

It belongs to the peptidase A1 family.

It localises to the secreted. It carries out the reaction Preferential cleavage: hydrophobic, preferably aromatic, residues in P1 and P1' positions. Cleaves 1-Phe-|-Val-2, 4-Gln-|-His-5, 13-Glu-|-Ala-14, 14-Ala-|-Leu-15, 15-Leu-|-Tyr-16, 16-Tyr-|-Leu-17, 23-Gly-|-Phe-24, 24-Phe-|-Phe-25 and 25-Phe-|-Tyr-26 bonds in the B chain of insulin.. In terms of biological role, shows particularly broad specificity; although bonds involving phenylalanine and leucine are preferred, many others are also cleaved to some extent. The polypeptide is Pepsin A (PGA) (Canis lupus familiaris (Dog)).